The following is an 89-amino-acid chain: Putative membrane protein insertion efficiency factor (89 aa).

This sequence belongs to the UPF0161 family.

It localises to the cell membrane. Could be involved in insertion of integral membrane proteins into the membrane. This chain is Putative membrane protein insertion efficiency factor, found in Exiguobacterium sp. (strain ATCC BAA-1283 / AT1b).